Consider the following 172-residue polypeptide: 18.6 kDa class III heat shock protein (172 aa).

A disordered region spans residues 29–54; that stretch reads RRSAGDHAHHAAHGHGQHRISGIGGG. Residues 48–172 enclose the sHSP domain; it reads ISGIGGGAPV…KTKSVQVTIA (125 aa).

It belongs to the small heat shock protein (HSP20) family. As to quaternary structure, may form oligomeric structures.

The protein localises to the cytoplasm. The polypeptide is 18.6 kDa class III heat shock protein (HSP18.6) (Oryza sativa subsp. japonica (Rice)).